The following is a 384-amino-acid chain: GTPase Obg (384 aa).

The Obg domain occupies 1 to 159 (MKFVDEVEIR…RPLKLELMLL (159 aa)). Positions 72-94 (NGMGKNCTGRRGNDIVLPVPPGT) are disordered. An OBG-type G domain is found at 160–333 (ADVGLLGMPN…LCREVMSYLE (174 aa)). Residues 166 to 173 (GMPNAGKS), 191 to 195 (FTTLI), 213 to 216 (DIPG), 283 to 286 (NKVD), and 314 to 316 (AAL) each bind GTP. Positions 173 and 193 each coordinate Mg(2+). The interval 358-384 (EEVLEEEMDDEDDDDDDDHDVEVIYQK) is disordered. Over residues 360-377 (VLEEEMDDEDDDDDDDHD) the composition is skewed to acidic residues.

Belongs to the TRAFAC class OBG-HflX-like GTPase superfamily. OBG GTPase family. Monomer. Mg(2+) serves as cofactor.

The protein localises to the cytoplasm. Its function is as follows. An essential GTPase which binds GTP, GDP and possibly (p)ppGpp with moderate affinity, with high nucleotide exchange rates and a fairly low GTP hydrolysis rate. Plays a role in control of the cell cycle, stress response, ribosome biogenesis and in those bacteria that undergo differentiation, in morphogenesis control. The chain is GTPase Obg from Idiomarina loihiensis (strain ATCC BAA-735 / DSM 15497 / L2-TR).